The following is a 331-amino-acid chain: Pyrimidine monooxygenase RutA (331 aa).

FMN is bound by residues 79–80 (IK), Asn145, Glu154, 170–171 (RY), and Ser220. A disordered region spans residues 300-331 (WLTEQSQKDTRSGTDTNVRQMADPTSASAFNH). Residues 312–331 (GTDTNVRQMADPTSASAFNH) show a composition bias toward polar residues.

The protein belongs to the NtaA/SnaA/DszA monooxygenase family. RutA subfamily.

The enzyme catalyses uracil + FMNH2 + NADH + O2 = (Z)-3-ureidoacrylate + FMN + NAD(+) + H2O + H(+). It catalyses the reaction thymine + FMNH2 + NADH + O2 = (Z)-2-methylureidoacrylate + FMN + NAD(+) + H2O + H(+). Its function is as follows. Catalyzes the pyrimidine ring opening between N-3 and C-4 by an unusual flavin hydroperoxide-catalyzed mechanism, adding oxygen atoms in the process to yield ureidoacrylate peracid, that immediately reacts with FMN forming ureidoacrylate and FMN-N(5)-oxide. The FMN-N(5)-oxide reacts spontaneously with NADH to produce FMN. Requires the flavin reductase RutF to regenerate FMN in vivo. This chain is Pyrimidine monooxygenase RutA, found in Escherichia coli O7:K1 (strain IAI39 / ExPEC).